The primary structure comprises 256 residues: Hydroxyacylglutathione hydrolase (256 aa).

Residues His57, His59, Asp61, His62, His115, Asp134, and His172 each contribute to the Zn(2+) site.

It belongs to the metallo-beta-lactamase superfamily. Glyoxalase II family. In terms of assembly, monomer. Requires Zn(2+) as cofactor.

It carries out the reaction an S-(2-hydroxyacyl)glutathione + H2O = a 2-hydroxy carboxylate + glutathione + H(+). The protein operates within secondary metabolite metabolism; methylglyoxal degradation; (R)-lactate from methylglyoxal: step 2/2. Functionally, thiolesterase that catalyzes the hydrolysis of S-D-lactoyl-glutathione to form glutathione and D-lactic acid. The chain is Hydroxyacylglutathione hydrolase from Rhizobium meliloti (strain 1021) (Ensifer meliloti).